Consider the following 396-residue polypeptide: Elongation factor Tu (396 aa).

The region spanning 10–206 is the tr-type G domain; it reads KPHCNIGTIG…NVDEYIPQPE (197 aa). Residues 19–26 are G1; it reads GHVDHGKT. 19-26 is a GTP binding site; the sequence is GHVDHGKT. Residue Thr-26 participates in Mg(2+) binding. The G2 stretch occupies residues 60 to 64; that stretch reads GITIS. The G3 stretch occupies residues 81–84; it reads DCPG. GTP-binding positions include 81–85 and 136–139; these read DCPGH and NKCD. The G4 stretch occupies residues 136–139; the sequence is NKCD. The interval 174-176 is G5; sequence SAL.

This sequence belongs to the TRAFAC class translation factor GTPase superfamily. Classic translation factor GTPase family. EF-Tu/EF-1A subfamily. In terms of assembly, monomer.

The protein resides in the cytoplasm. The catalysed reaction is GTP + H2O = GDP + phosphate + H(+). GTP hydrolase that promotes the GTP-dependent binding of aminoacyl-tRNA to the A-site of ribosomes during protein biosynthesis. This chain is Elongation factor Tu, found in Afipia carboxidovorans (strain ATCC 49405 / DSM 1227 / KCTC 32145 / OM5) (Oligotropha carboxidovorans).